A 297-amino-acid polypeptide reads, in one-letter code: Acetylglutamate kinase (297 aa).

Substrate contacts are provided by residues 72 to 73 (GG), arginine 94, and asparagine 193.

This sequence belongs to the acetylglutamate kinase family. ArgB subfamily.

The protein localises to the cytoplasm. The catalysed reaction is N-acetyl-L-glutamate + ATP = N-acetyl-L-glutamyl 5-phosphate + ADP. The protein operates within amino-acid biosynthesis; L-arginine biosynthesis; N(2)-acetyl-L-ornithine from L-glutamate: step 2/4. Its function is as follows. Catalyzes the ATP-dependent phosphorylation of N-acetyl-L-glutamate. The sequence is that of Acetylglutamate kinase from Mycobacterium leprae (strain TN).